Consider the following 1407-residue polypeptide: Clustered mitochondria protein (1407 aa).

Basic residues predominate over residues 1–12 (MAGKSNKSKAKR). Disordered regions lie at residues 1–36 (MAGK…PVAA) and 83–103 (IPKA…PKQG). The segment covering 14 to 24 (AQSTTTNSTTD) has biased composition (polar residues). A Clu domain is found at 384–670 (PDHKRDAARA…RVTPRDANYT (287 aa)). The segment at 724–760 (IDGEANGASNSDQKSISDKQNTTAEDYAAGSSESSKS) is disordered. Residues 730 to 747 (GASNSDQKSISDKQNTTA) show a composition bias toward polar residues. TPR repeat units lie at residues 1025 to 1058 (AKDL…LQQV), 1067 to 1100 (ANCC…NERC), 1109 to 1142 (AHSY…LGLS), 1151 to 1184 (AATF…NERL), and 1193 to 1226 (AVCY…LVKQ). A disordered region spans residues 1358–1407 (VSSEKGGENGEAKVQEKKESSENGKTENLAPAGLGAGLTSLDKKKQKAKK). Basic and acidic residues predominate over residues 1362-1382 (KGGENGEAKVQEKKESSENGK).

This sequence belongs to the CLU family.

The protein resides in the cytoplasm. Functionally, mRNA-binding protein involved in proper cytoplasmic distribution of mitochondria. Together with REC2, REC3 and FMT/CLU, contributes to the establishment of the cellular volume devoted to the chloroplast compartment. This chain is Clustered mitochondria protein, found in Arabidopsis thaliana (Mouse-ear cress).